The sequence spans 131 residues: Fluoride-specific ion channel FluC 2 (131 aa).

Transmembrane regions (helical) follow at residues Ile4–Trp24, Val46–Phe66, Pro71–Leu91, and Ala105–Ala125. Residues Gly81 and Thr84 each contribute to the Na(+) site.

It belongs to the fluoride channel Fluc/FEX (TC 1.A.43) family.

The protein localises to the cell inner membrane. The enzyme catalyses fluoride(in) = fluoride(out). Na(+) is not transported, but it plays an essential structural role and its presence is essential for fluoride channel function. Functionally, fluoride-specific ion channel. Important for reducing fluoride concentration in the cell, thus reducing its toxicity. In Rhodopseudomonas palustris (strain BisB18), this protein is Fluoride-specific ion channel FluC 2.